The chain runs to 279 residues: uncharacterized protein (279 aa).

The next 6 helical transmembrane spans lie at 29 to 49, 77 to 97, 105 to 125, 147 to 167, 186 to 206, and 240 to 260; these read PYNM…ALVF, VLYA…GTSL, WTKM…IIVT, VLGI…TGAV, TIGP…AIAF, and PIAG…VEMV.

Belongs to the DcuC/DcuD transporter (TC 2.A.61) family.

The protein resides in the cell membrane. This is an uncharacterized protein from Haemophilus influenzae (strain ATCC 51907 / DSM 11121 / KW20 / Rd).